The sequence spans 257 residues: Ribonuclease PH (257 aa).

Residues arginine 86 and 124–126 each bind phosphate; that span reads GTR.

The protein belongs to the RNase PH family. In terms of assembly, homohexameric ring arranged as a trimer of dimers.

It carries out the reaction tRNA(n+1) + phosphate = tRNA(n) + a ribonucleoside 5'-diphosphate. Functionally, phosphorolytic 3'-5' exoribonuclease that plays an important role in tRNA 3'-end maturation. Removes nucleotide residues following the 3'-CCA terminus of tRNAs; can also add nucleotides to the ends of RNA molecules by using nucleoside diphosphates as substrates, but this may not be physiologically important. Probably plays a role in initiation of 16S rRNA degradation (leading to ribosome degradation) during starvation. This chain is Ribonuclease PH, found in Halalkalibacterium halodurans (strain ATCC BAA-125 / DSM 18197 / FERM 7344 / JCM 9153 / C-125) (Bacillus halodurans).